A 191-amino-acid polypeptide reads, in one-letter code: Corrinoid adenosyltransferase (191 aa).

Residues 10–18 (TRTGDNGTT), Lys28, 140–145 (RRAERS), and Asn166 contribute to the ATP site.

Belongs to the Cob(I)alamin adenosyltransferase family.

It localises to the cytoplasm. The enzyme catalyses 2 cob(II)yrinate a,c diamide + reduced [electron-transfer flavoprotein] + 2 ATP = 2 adenosylcob(III)yrinate a,c-diamide + 2 triphosphate + oxidized [electron-transfer flavoprotein] + 3 H(+). It carries out the reaction 2 cob(II)alamin + reduced [electron-transfer flavoprotein] + 2 ATP = 2 adenosylcob(III)alamin + 2 triphosphate + oxidized [electron-transfer flavoprotein] + 3 H(+). Its pathway is cofactor biosynthesis; adenosylcobalamin biosynthesis; adenosylcobalamin from cob(II)yrinate a,c-diamide: step 2/7. This chain is Corrinoid adenosyltransferase, found in Mycobacterium leprae (strain TN).